A 101-amino-acid polypeptide reads, in one-letter code: Carboxysome shell vertex protein CcmL (101 aa).

The BMV domain occupies 1–84 (MQIAKVRGTV…VDAAVVAIID (84 aa)).

Belongs to the CcmL/EutN family. CcmL subfamily. As to quaternary structure, homopentamer. Interacts with full-length CcmM.

Its subcellular location is the carboxysome. In terms of biological role, probably forms vertices in the carboxysome, a polyhedral inclusion where RuBisCO (ribulose bisphosphate carboxylase, rbcL-rbcS) is sequestered. Has been modeled to induce curvature upon insertion into an otherwise flat hexagonal molecular layer of CcmK subunits. This is Carboxysome shell vertex protein CcmL from Nostoc sp. (strain PCC 7120 / SAG 25.82 / UTEX 2576).